A 436-amino-acid polypeptide reads, in one-letter code: Eukaryotic translation initiation factor 4B (436 aa).

The interval 56–98 (AKNNSNNTRSGGFGGSFGGRSRLDPALGGGSSDRREEYPVPDA) is disordered. Residues Ser65 and Ser71 each carry the phosphoserine modification. Positions 101–183 (YRAVINNIPW…RTVYVSVAAP (83 aa)) constitute an RRM domain. A disordered region spans residues 185–406 (RGGGADVDWS…EKQNGDAKEN (222 aa)). Residues 190–210 (DVDWSSARGSNFQGDGREDAP) form a 1; approximate repeat. The segment at 190-350 (DVDWSSARGS…DWGAARGAQF (161 aa)) is 7 X approximate tandem repeats. 5 repeat units span residues 211 to 232 (DLDWGAARGSNFRGPRREREEV), 233 to 258 (DIDWTAARGSNFQGSSRPPRREREEV), 259 to 284 (DIDWSAARGSNFQGSSRPPRREREEP), 285 to 310 (DIDWSAARGSNFQSSSRPPRREREEP), and 311 to 340 (DIDWSAARGSNFQSSSRPPRREREKEEPAL). The segment covering 329-338 (PRREREKEEP) has biased composition (basic and acidic residues). One copy of the 7; truncated repeat lies at 341–350 (DWGAARGAQF). Composition is skewed to basic and acidic residues over residues 359 to 376 (TYKDRSLTNKKTTDEQPK) and 397 to 406 (EKQNGDAKEN).

Involved in translation initiation. May be the homolog of mammalian eIF4B and be part of an RNA helicase. STM1/TIF3 is a non-essential gene. This Saccharomyces cerevisiae (strain ATCC 204508 / S288c) (Baker's yeast) protein is Eukaryotic translation initiation factor 4B (TIF3).